The sequence spans 439 residues: Cell division protein DivIB (439 aa).

2 disordered regions span residues 1 to 96 (MDDK…DSNI) and 119 to 149 (DNEQ…KSKV). Over 1–173 (MDDKTKNDQQ…RRKRQKRIQY (173 aa)) the chain is Cytoplasmic. Acidic residues predominate over residues 11-20 (ESNEDKDELE). Residues 26–38 (TSKKRRQRKRSKA) show a composition bias toward basic residues. Residues 64–76 (KDFKKEESNDKNN) are compositionally biased toward basic and acidic residues. The segment covering 77-86 (DSASSHANDN) has biased composition (low complexity). Over residues 87 to 96 (NIDDSTDSNI) the composition is skewed to acidic residues. The span at 119-133 (DNEQPQSAPKEQNSD) shows a compositional bias: polar residues. The chain crosses the membrane as a helical span at residues 174–194 (SVITILVLLIAVILIYMFSPL). Residues 195–263 (SKIAHVNING…NTLNVDITEN (69 aa)) enclose the POTRA domain. Topologically, residues 195-439 (SKIAHVNING…KINKQSSKNN (245 aa)) are extracellular. The disordered stretch occupies residues 396–439 (YRGNTSSQSESDKNVTKSSQEENQAKEELQSVLNKINKQSSKNN). Basic and acidic residues predominate over residues 405–424 (ESDKNVTKSSQEENQAKEEL). A compositionally biased stretch (polar residues) spans 426-439 (SVLNKINKQSSKNN).

Belongs to the FtsQ/DivIB family. DivIB subfamily.

It localises to the cell membrane. Functionally, cell division protein that may be involved in stabilizing or promoting the assembly of the division complex. In Staphylococcus aureus (strain NCTC 8325 / PS 47), this protein is Cell division protein DivIB.